The following is a 112-amino-acid chain: Small ribosomal subunit protein bS16 (112 aa).

It belongs to the bacterial ribosomal protein bS16 family.

The protein is Small ribosomal subunit protein bS16 of Karelsulcia muelleri (strain GWSS) (Sulcia muelleri).